Reading from the N-terminus, the 626-residue chain is ATP-dependent rRNA helicase spb4 (626 aa).

The Q motif motif lies at 14–42 (WDALTPSLAEWVLDAISSMGFEKMTPVQA). The Helicase ATP-binding domain occupies 45-246 (IPLFMGNKDV…RVGLRNPVKI (202 aa)). 58–65 (AVTGSGKT) is a binding site for ATP. A DEAD box motif is present at residues 194–197 (DEAD). In terms of domain architecture, Helicase C-terminal spans 279 to 437 (ALLSLLSQLE…TTGEAAKILI (159 aa)). A disordered region spans residues 553–599 (QREAWSQKHEKQDLKELKREKKKRKREIERLEKMTDEEKKEEQAKEK). Basic and acidic residues-rich tracts occupy residues 554–571 (REAW…ELKR) and 578–599 (REIE…AKEK). A coiled-coil region spans residues 558 to 620 (SQKHEKQDLK…RKIEDDADVE (63 aa)).

It belongs to the DEAD box helicase family. DDX55/SPB4 subfamily. Component of pre-60S ribosomal complexes.

The protein resides in the nucleus. It localises to the nucleolus. It carries out the reaction ATP + H2O = ADP + phosphate + H(+). ATP-binding RNA helicase involved in the biogenesis of 60S ribosomal subunits. Binds 90S pre-ribosomal particles and dissociates from pre-60S ribosomal particles after processing of 27SB pre-rRNA. Required for the normal formation of 18S rRNA through the processing of pre-rRNAs at sites A0, A1 and A2, and the normal formation of 25S and 5.8S rRNAs through the processing of pre-rRNAs at sites C1 and C2. The polypeptide is ATP-dependent rRNA helicase spb4 (Botryotinia fuckeliana (strain B05.10) (Noble rot fungus)).